The chain runs to 207 residues: Na(+)-translocating ferredoxin:NAD(+) oxidoreductase complex subunit G (207 aa).

A helical transmembrane segment spans residues Gly18–Val38. FMN phosphoryl threonine is present on Thr185.

Belongs to the RnfG family. The complex is composed of six subunits: RnfA, RnfB, RnfC, RnfD, RnfE and RnfG. The cofactor is FMN.

The protein localises to the cell membrane. It carries out the reaction 2 reduced [2Fe-2S]-[ferredoxin] + Na(+)(in) + NAD(+) + H(+) = 2 oxidized [2Fe-2S]-[ferredoxin] + Na(+)(out) + NADH. Part of a membrane-bound complex that couples electron transfer with translocation of ions across the membrane. Couples electron transfer from reduced ferredoxin to NAD(+) with electrogenic movement of Na(+) out of the cell. Involved in caffeate respiration. In Acetobacterium woodii (strain ATCC 29683 / DSM 1030 / JCM 2381 / KCTC 1655 / WB1), this protein is Na(+)-translocating ferredoxin:NAD(+) oxidoreductase complex subunit G.